A 583-amino-acid chain; its full sequence is MSKTALGKANASVQSARALYLRLLKYAARYWVAFLISIIALVTFSATNTGFLATIKLVTDAGFVNQDSTKLHLLPFMLFGLLAIRALAGFISNFAMRWVARRVVENLRQDTFRRLMSLPVSFFDAVSAGVVTSKLTYDTEQMAGAATKVAMSAVRDTLTILGMVGYMLYLDWQLTLIFAVVAPAMAWYLKSMTPKLRSSGKAVQQTMGEMTKVIEEAVSGQRMVKIFGGGDYEYQRFTKVAGKNRHMQIRLARFSGLNSMVVELLAGVALALVVFYAVGKFSAGEFAAFIGALLMLIGPVKTLTSLNEELQVGLAAAHSVFELIDSIPEVDEGHEEIGRAEGSIVFENVTLQYPSAQRPALLDLNFTVKPGEKIALVGRSGGGKTTLVNLLPRFYEVQQGRVLIDGVDVRNMSLKSLRQQFSLVSQDVILFNDTVFNNIAYGVLRNASEEDVIAAAKAAHAWDFIQQLPNGLQSEIGDRGVRLSGGQRQRLAIARAILKNAPILLLDEATSALDTESERHVQAALDELMQNRTSIVIAHRLSTIENADRIMVMEQGRIIEGGSHEELLALDGHYAKLYRKQFH.

The next 6 helical transmembrane spans lie at 32–52, 71–91, 115–135, 160–180, 259–279, and 286–306; these read VAFLISIIALVTFSATNTGFL, LHLLPFMLFGLLAIRALAGFI, LMSLPVSFFDAVSAGVVTSKL, ILGMVGYMLYLDWQLTLIFAV, SMVVELLAGVALALVVFYAVG, and FAAFIGALLMLIGPVKTLTSL. Residues 34-312 form the ABC transmembrane type-1 domain; sequence FLISIIALVT…LTSLNEELQV (279 aa). One can recognise an ABC transporter domain in the interval 344-580; sequence IVFENVTLQY…DGHYAKLYRK (237 aa). Residue 378–385 coordinates ATP; sequence GRSGGGKT.

It belongs to the ABC transporter superfamily. Lipid exporter (TC 3.A.1.106) family. Homodimer.

It is found in the cell inner membrane. It catalyses the reaction ATP + H2O + lipid A-core oligosaccharideSide 1 = ADP + phosphate + lipid A-core oligosaccharideSide 2.. Its function is as follows. Involved in lipopolysaccharide (LPS) biosynthesis. Translocates lipid A-core from the inner to the outer leaflet of the inner membrane. Transmembrane domains (TMD) form a pore in the inner membrane and the ATP-binding domain (NBD) is responsible for energy generation. The chain is ATP-dependent lipid A-core flippase from Methylobacillus flagellatus (strain ATCC 51484 / DSM 6875 / VKM B-1610 / KT).